Consider the following 164-residue polypeptide: UPF0178 protein RPD_2254 (164 aa).

This sequence belongs to the UPF0178 family.

The sequence is that of UPF0178 protein RPD_2254 from Rhodopseudomonas palustris (strain BisB5).